The sequence spans 145 residues: D-aminoacyl-tRNA deacylase (145 aa).

The Gly-cisPro motif, important for rejection of L-amino acids motif lies at 137–138 (GP).

Belongs to the DTD family. Homodimer.

Its subcellular location is the cytoplasm. The enzyme catalyses glycyl-tRNA(Ala) + H2O = tRNA(Ala) + glycine + H(+). It carries out the reaction a D-aminoacyl-tRNA + H2O = a tRNA + a D-alpha-amino acid + H(+). In terms of biological role, an aminoacyl-tRNA editing enzyme that deacylates mischarged D-aminoacyl-tRNAs. Also deacylates mischarged glycyl-tRNA(Ala), protecting cells against glycine mischarging by AlaRS. Acts via tRNA-based rather than protein-based catalysis; rejects L-amino acids rather than detecting D-amino acids in the active site. By recycling D-aminoacyl-tRNA to D-amino acids and free tRNA molecules, this enzyme counteracts the toxicity associated with the formation of D-aminoacyl-tRNA entities in vivo and helps enforce protein L-homochirality. This is D-aminoacyl-tRNA deacylase from Pseudomonas putida (strain GB-1).